We begin with the raw amino-acid sequence, 471 residues long: Putative multidrug resistance protein MdtD (471 aa).

Residues 1-11 are Periplasmic-facing; the sequence is MTDLPDSTRWQ. The helical transmembrane segment at 12 to 32 threads the bilayer; that stretch reads LWIVAFGFFMQSLDTTIVNTA. At 33–48 the chain is on the cytoplasmic side; the sequence is LPSMAQSLGESPLHMH. The chain crosses the membrane as a helical span at residues 49–69; the sequence is MVIVSYVLTVAVMLPASGWLA. At 70–76 the chain is on the periplasmic side; it reads DKVGVRN. A helical transmembrane segment spans residues 77–97; sequence IFFTAIVLFTLGSLFCALSGT. Residues 98–101 lie on the Cytoplasmic side of the membrane; the sequence is LNEL. Residues 102-124 traverse the membrane as a helical segment; that stretch reads LLARALQGVGGAMMVPVGRLTVM. Over 125-137 the chain is Periplasmic; it reads KIVPREQYMAAMT. The helical transmembrane segment at 138 to 158 threads the bilayer; the sequence is FVTLPGQVGPLLGPALGGLLV. The Cytoplasmic portion of the chain corresponds to 159 to 164; sequence EYASWH. Residues 165–185 form a helical membrane-spanning segment; the sequence is WIFLINIPVGIIGAIATLMLM. The Periplasmic segment spans residues 186–196; that stretch reads PNYTMQTRRFD. A helical transmembrane segment spans residues 197–217; the sequence is LSGFLLLAVGMAVLTLALDGS. Topologically, residues 218 to 224 are cytoplasmic; the sequence is KGTGLSP. A helical transmembrane segment spans residues 225-245; sequence LTIDGLVAVGVVALVLYLLHA. Residues 246 to 262 are Periplasmic-facing; it reads RNNNRALFSLKLFRTRT. The chain crosses the membrane as a helical span at residues 263–283; sequence FSLGLAGSFAGRIGSGMLPFM. The Cytoplasmic portion of the chain corresponds to 284–285; that stretch reads TP. Residues 286–306 form a helical membrane-spanning segment; that stretch reads VFLQIGLGFSPFHAGLMMIPM. At 307–341 the chain is on the periplasmic side; that stretch reads VLGSMGMKRIVVQVVNRFGYRRVLVATTLGLSLVT. A helical transmembrane segment spans residues 342–362; the sequence is LLFMTTALLGWYYVLPFVLFL. At 363–395 the chain is on the cytoplasmic side; that stretch reads QGMVNSTRFSSMNTLTLKDLPDNLASSGNSLLS. The chain crosses the membrane as a helical span at residues 396–416; the sequence is MIMQLSMSIGVTIAGLLLGLF. The Periplasmic segment spans residues 417–430; it reads GSQHVSVDSGTTQT. The helical transmembrane segment at 431–451 threads the bilayer; the sequence is VFMYTWLSMAFIIALPAFIFA. At 452-471 the chain is on the cytoplasmic side; it reads RVPNDTHQNVAISRRKRSAQ.

Belongs to the major facilitator superfamily. TCR/Tet family.

The protein resides in the cell inner membrane. The sequence is that of Putative multidrug resistance protein MdtD from Escherichia coli O8 (strain IAI1).